A 276-amino-acid polypeptide reads, in one-letter code: Large ribosomal subunit protein uL2 (276 aa).

Positions 223-276 (VVMNPVDHPHGGGEGKSSGGRHPVSPWGKKTRGPKTRNNKVTDRLIIRRRNAKR) are disordered. The segment covering 251–260 (KKTRGPKTRN) has biased composition (basic residues).

This sequence belongs to the universal ribosomal protein uL2 family. Part of the 50S ribosomal subunit. Forms a bridge to the 30S subunit in the 70S ribosome.

In terms of biological role, one of the primary rRNA binding proteins. Required for association of the 30S and 50S subunits to form the 70S ribosome, for tRNA binding and peptide bond formation. It has been suggested to have peptidyltransferase activity; this is somewhat controversial. Makes several contacts with the 16S rRNA in the 70S ribosome. The chain is Large ribosomal subunit protein uL2 from Hyphomonas neptunium (strain ATCC 15444).